The sequence spans 218 residues: MATLTPRQQQIFDLIRNTIRNTGFPPTRAEIAAEFGFSSPNAAEEHLRALARKGVIELTPGASRGIRLKVARSDSEMPDQFSLPVSGIMQLTLPLVGRVAAGSPILAAEHIDRQYQVDASVFDERPDYLLRVRGLSMRDAGILDGDLLAVRKASEAPNGKIVVARLGDDVTVKRLQRRDGAIELIAENPDFPNIMVTPGREEFSLEGIAVGLIRSSGF.

Positions 28–48 (RAEIAAEFGFSSPNAAEEHLR) form a DNA-binding region, H-T-H motif. Catalysis depends on for autocatalytic cleavage activity residues Ser136 and Lys173.

The protein belongs to the peptidase S24 family. In terms of assembly, homodimer.

The catalysed reaction is Hydrolysis of Ala-|-Gly bond in repressor LexA.. In terms of biological role, represses a number of genes involved in the response to DNA damage (SOS response), including recA and lexA. In the presence of single-stranded DNA, RecA interacts with LexA causing an autocatalytic cleavage which disrupts the DNA-binding part of LexA, leading to derepression of the SOS regulon and eventually DNA repair. This Cupriavidus pinatubonensis (strain JMP 134 / LMG 1197) (Cupriavidus necator (strain JMP 134)) protein is LexA repressor.